The sequence spans 99 residues: UPF0235 protein Cag_0319 (99 aa).

Belongs to the UPF0235 family.

The polypeptide is UPF0235 protein Cag_0319 (Chlorobium chlorochromatii (strain CaD3)).